A 177-amino-acid chain; its full sequence is ATP synthase subunit delta (177 aa).

The protein belongs to the ATPase delta chain family. F-type ATPases have 2 components, F(1) - the catalytic core - and F(0) - the membrane proton channel. F(1) has five subunits: alpha(3), beta(3), gamma(1), delta(1), epsilon(1). F(0) has three main subunits: a(1), b(2) and c(10-14). The alpha and beta chains form an alternating ring which encloses part of the gamma chain. F(1) is attached to F(0) by a central stalk formed by the gamma and epsilon chains, while a peripheral stalk is formed by the delta and b chains.

Its subcellular location is the cell inner membrane. Its function is as follows. F(1)F(0) ATP synthase produces ATP from ADP in the presence of a proton or sodium gradient. F-type ATPases consist of two structural domains, F(1) containing the extramembraneous catalytic core and F(0) containing the membrane proton channel, linked together by a central stalk and a peripheral stalk. During catalysis, ATP synthesis in the catalytic domain of F(1) is coupled via a rotary mechanism of the central stalk subunits to proton translocation. In terms of biological role, this protein is part of the stalk that links CF(0) to CF(1). It either transmits conformational changes from CF(0) to CF(1) or is implicated in proton conduction. The protein is ATP synthase subunit delta of Shewanella frigidimarina (strain NCIMB 400).